The following is a 1415-amino-acid chain: DNA-directed RNA polymerase subunit beta' (1415 aa).

Residues Cys214, Cys294, Cys301, and Cys304 each coordinate Zn(2+). Residues 1335–1351 (QNFVDSQGKPQSQSSFI) are compositionally biased toward polar residues. Residues 1335–1390 (QNFVDSQGKPQSQSSFIDDSMSEFSPVKDKSGSVLDDSDFPPGNFDSDFPADNYDL) form a disordered region.

Belongs to the RNA polymerase beta' chain family. RpoC2 subfamily. In terms of assembly, in cyanobacteria the RNAP catalytic core is composed of 2 alpha, 1 beta, 1 beta', 1 gamma and 1 omega subunit. When a sigma factor is associated with the core the holoenzyme is formed, which can initiate transcription. It depends on Zn(2+) as a cofactor.

The catalysed reaction is RNA(n) + a ribonucleoside 5'-triphosphate = RNA(n+1) + diphosphate. DNA-dependent RNA polymerase catalyzes the transcription of DNA into RNA using the four ribonucleoside triphosphates as substrates. The chain is DNA-directed RNA polymerase subunit beta' from Trichodesmium erythraeum (strain IMS101).